The primary structure comprises 92 residues: Small ribosomal subunit protein uS19 (92 aa).

The protein belongs to the universal ribosomal protein uS19 family.

Functionally, protein S19 forms a complex with S13 that binds strongly to the 16S ribosomal RNA. The protein is Small ribosomal subunit protein uS19 of Rhodopseudomonas palustris (strain BisA53).